The primary structure comprises 64 residues: Large ribosomal subunit protein bL35 (64 aa).

It belongs to the bacterial ribosomal protein bL35 family.

The sequence is that of Large ribosomal subunit protein bL35 from Aliivibrio fischeri (strain ATCC 700601 / ES114) (Vibrio fischeri).